We begin with the raw amino-acid sequence, 188 residues long: Ribosome-recycling factor (188 aa).

This sequence belongs to the RRF family.

The protein resides in the cytoplasm. In terms of biological role, responsible for the release of ribosomes from messenger RNA at the termination of protein biosynthesis. May increase the efficiency of translation by recycling ribosomes from one round of translation to another. This is Ribosome-recycling factor from Bradyrhizobium diazoefficiens (strain JCM 10833 / BCRC 13528 / IAM 13628 / NBRC 14792 / USDA 110).